The sequence spans 190 residues: Xanthine phosphoribosyltransferase 1 (190 aa).

Xanthine is bound by residues Leu-20 and Asn-27. 128–132 (ANGEA) serves as a coordination point for 5-phospho-alpha-D-ribose 1-diphosphate. Lys-156 serves as a coordination point for xanthine.

The protein belongs to the purine/pyrimidine phosphoribosyltransferase family. Xpt subfamily. Homodimer.

It is found in the cytoplasm. The enzyme catalyses XMP + diphosphate = xanthine + 5-phospho-alpha-D-ribose 1-diphosphate. The protein operates within purine metabolism; XMP biosynthesis via salvage pathway; XMP from xanthine: step 1/1. Functionally, converts the preformed base xanthine, a product of nucleic acid breakdown, to xanthosine 5'-monophosphate (XMP), so it can be reused for RNA or DNA synthesis. In Clostridium botulinum (strain ATCC 19397 / Type A), this protein is Xanthine phosphoribosyltransferase 1.